A 333-amino-acid chain; its full sequence is E3 ubiquitin-protein ligase MIR1 (333 aa).

The RING-CH-type zinc-finger motif lies at 1–60; the sequence is MEDEDVPVCWICNEELGNERFRACGCTGELENVHRSCLSTWLTISRNTACQICGVVYNTR. Residues 1–82 lie on the Cytoplasmic side of the membrane; it reads MEDEDVPVCW…PRLTYQEGLE (82 aa). Zn(2+)-binding residues include cysteine 9, cysteine 12, cysteine 24, cysteine 26, histidine 34, cysteine 37, cysteine 50, and cysteine 53. Residues 83 to 103 form a helical membrane-spanning segment; that stretch reads LIVFIFIMTLGAAGLAAATWV. The Extracellular portion of the chain corresponds to 104–121; it reads WLYIVGGHDPEIDHVAAA. A helical transmembrane segment spans residues 122–142; that stretch reads AYYVFFVFYQLFVVFGLGAFF. Topologically, residues 143-333 are cytoplasmic; sequence HMMRHVGRAY…SAVSSALMFH (191 aa). The disordered stretch occupies residues 187–257; it reads GDNQDEEGPA…GRDDNVEPTA (71 aa). The span at 195–221 shows a compositional bias: low complexity; it reads PAGAAPGDQNGPAGAAPGDQDGPADGA. The segment covering 235 to 252 has biased composition (basic and acidic residues); that stretch reads AGYKEAGEPTHNDGRDDN.

As to quaternary structure, binds human MHC-I and CD1D.

The protein resides in the host cell membrane. The protein localises to the host endoplasmic reticulum. The catalysed reaction is [E2 ubiquitin-conjugating enzyme]-S-ubiquitinyl-L-cysteine + [acceptor protein]-L-cysteine = [E2 ubiquitin-conjugating enzyme]-L-cysteine + [acceptor protein]-S-ubiquitinyl-L-cysteine.. It participates in protein modification; protein ubiquitination. Membrane-bound E3 ubiquitin ligase expressed during late stages of lytic replication to mediate polyubiquitination of various host membrane proteins related to the immune response. Promotes ubiquitination and subsequent degradation of host MHC-I and CD1D molecules, DC-SIGN and DC-SIGNR, presumably to prevent lysis of infected cells by cytotoxic T-lymphocytes. Binds target molecules through transmembrane interaction. E3 ubiquitin-protein ligases accept ubiquitin from specific E2 ubiquitin-conjugating enzymes, and then transfer it to target protein. The result of this ubiquitination is the enhancement of the endocytosis of the target chain and the delivery to the lysosome, where it is proteolytically destroyed. Induces ubiquitination not only on lysines, but also on cysteine residues. In Human herpesvirus 8 type P (isolate GK18) (HHV-8), this protein is E3 ubiquitin-protein ligase MIR1 (K3).